A 154-amino-acid polypeptide reads, in one-letter code: Egg-lysin (154 aa).

An N-terminal signal peptide occupies residues 1 to 18; it reads MKLFVLCIFAMMATLAMS.

In terms of assembly, homodimer. Sperm.

In terms of biological role, dissolves the egg vitelline layer nonenzymatically during fertilization. It creates a hole of about 3 mu-m in diameter through which the sperm pass. In Haliotis kamtschatkana (Pinto abalone), this protein is Egg-lysin.